The primary structure comprises 876 residues: MESQRMTWLYDRHHSLKHNKAERQAILSTYRLAKRPNLSSEGMIGESCIVRTNCFSVHLESLDDQTIYEYDVCVTPEVGINRAVIRELVKQQKDSGLGGRLPAYDGRKRLYTSGPLPFDSHRFLVLLDSIEDSPEESRHLRVRDFVVTLKFAAKISLWTLRKFRGGKPNRESRAALRALDVVLKELPTARYTQFAGSFYSPNLGECRQLCKVLESWRGFHQRIQATQMGLQLNIDVSSSVFIKPVPVVDYVAQLLNEDILLDRPLCSTEFLKIKEALEGLKVQINGILFNTYHVQDLVHQAASFPVNFSIQYPSLPCLKVAHFGETIFLPLEVCKIAEGQCHQKQLNAKHMAALLQVARQPPNERDYNILQTVHQNKYQEDPHAKEFGIKIEEKLVSIKSRILPAPWLKFHDSGETTEFLPQLGIWNMMHKKMINGGRVKSWACVNFCWSVREYAARNFCYDLGFMCRESGMVFSVKPVLPLVIAKPGCVESALRTLHDDVMDILRPQGRKLDLLIVILPNNNGSLYGDVKRICETDIGLISQCCLAKHVLKMNKWYLASVALKINAKMGGRNTVLVDALEMRLPHVRDTPTIVFGAHVTHPHPGKANSSSIAAVVASQDWPEVTKYAGLISVQACHQESIQGLFKVQDDPERGTTTSGMIKEHLMSFYRATKRKPGRIIFYRDGVSKGQLPQALMHELGAIKMACASMGPDYNPLVTYVVLQKCRHTRLFADYYNANTHDSTANIRAGTVVDSNICQPNQFDFYLCSHRSTQGTKRPRYYHVLWDENDFLAGSFQELTNYLCYTSATCTQSISVVAPVHYARLLSSRARCYIKPRSIGDSTSHTSLPSEEDSSAASETGSLLPIKDNLKGAMFFC.

Positions 246–338 (PVVDYVAQLL…LPLEVCKIAE (93 aa)) constitute a PAZ domain. The Piwi domain occupies 514-834 (LLIVILPNNN…LSSRARCYIK (321 aa)). Positions 839 to 859 (GDSTSHTSLPSEEDSSAASET) are disordered.

This sequence belongs to the argonaute family. Ago subfamily.

Its function is as follows. Probably involved in the RNA silencing pathway. May bind to short RNAs such as microRNAs (miRNAs) or short interfering RNAs (siRNAs), and represses the translation of mRNAs which are complementary to them. The sequence is that of Protein argonaute 17 (AGO17) from Oryza sativa subsp. japonica (Rice).